A 417-amino-acid chain; its full sequence is uncharacterized protein (417 aa).

Positions 1-21 (MPYYWGAILIGGVFLAGCTQN) are cleaved as a signal peptide.

This is an uncharacterized protein from Methanocaldococcus jannaschii (strain ATCC 43067 / DSM 2661 / JAL-1 / JCM 10045 / NBRC 100440) (Methanococcus jannaschii).